The sequence spans 230 residues: 2,3-bisphosphoglycerate-dependent phosphoglycerate mutase (230 aa).

Residues arginine 8–asparagine 15, threonine 21–glycine 22, arginine 60, glutamate 87–tyrosine 90, lysine 98, arginine 114–arginine 115, and glycine 183–asparagine 184 each bind substrate. The active-site Tele-phosphohistidine intermediate is histidine 9. Glutamate 87 serves as the catalytic Proton donor/acceptor.

Belongs to the phosphoglycerate mutase family. BPG-dependent PGAM subfamily.

It carries out the reaction (2R)-2-phosphoglycerate = (2R)-3-phosphoglycerate. It functions in the pathway carbohydrate degradation; glycolysis; pyruvate from D-glyceraldehyde 3-phosphate: step 3/5. Catalyzes the interconversion of 2-phosphoglycerate and 3-phosphoglycerate. The sequence is that of 2,3-bisphosphoglycerate-dependent phosphoglycerate mutase from Streptococcus sanguinis (strain SK36).